The following is a 378-amino-acid chain: Transcription initiation factor IIA subunit 1 (378 aa).

Ala2 carries the post-translational modification N-acetylalanine. 3 stretches are compositionally biased toward low complexity: residues 69 to 79, 89 to 106, and 247 to 281; these read QVQQQHQPQQQ, QQAQ…TQQV, and PAQA…TGDT. Disordered regions lie at residues 69–108 and 247–331; these read QVQQ…QVLI and PAQA…QELF. Residues Ser282, Ser283, Ser318, and Ser323 each carry the phosphoserine; by TAF1 modification. The span at 282–331 shows a compositional bias: acidic residues; sequence SSEEDEDEEEDYDDDEEEDKEKDGAEDGQVEEEPLNSEDDVSDEEGQELF. DNA is bound by residues His345 and Arg346.

The protein belongs to the TFIIA subunit 1 family. In terms of assembly, TFIIA is a heterodimer of the large unprocessed subunit 1 and a small subunit gamma. It was originally believed to be a heterotrimer of an alpha (p35), a beta (p19) and a gamma subunit (p12). TFIIA forms a complex with TBP. Part of TBP-based Pol II pre-initiation complex (PIC), in which Pol II core assembles with general transcription factors and other specific initiation factors including GTF2E1, GTF2E2, GTF2F1, GTF2F2, TCEA1, ERCC2, ERCC3, GTF2H2, GTF2H3, GTF2H4, GTF2H5, GTF2A1, GTF2A2, GTF2B and TBP; this large multi-subunit PIC complex mediates DNA unwinding and targets Pol II core to the transcription start site where the first phosphodiester bond forms. In terms of processing, the alpha and beta subunits are postranslationally produced from the precursor form by TASP1. The cleavage promotes proteasomal degradation. Expressed in pachytene spermatocytes and spermatids.

It is found in the nucleus. TFIIA is a component of the transcription machinery of RNA polymerase II and plays an important role in transcriptional activation. TFIIA in a complex with TBP mediates transcriptional activity. This chain is Transcription initiation factor IIA subunit 1 (Gtf2a1), found in Mus musculus (Mouse).